A 94-amino-acid polypeptide reads, in one-letter code: Co-chaperonin GroES (94 aa).

It belongs to the GroES chaperonin family. In terms of assembly, heptamer of 7 subunits arranged in a ring. Interacts with the chaperonin GroEL.

The protein resides in the cytoplasm. Functionally, together with the chaperonin GroEL, plays an essential role in assisting protein folding. The GroEL-GroES system forms a nano-cage that allows encapsulation of the non-native substrate proteins and provides a physical environment optimized to promote and accelerate protein folding. GroES binds to the apical surface of the GroEL ring, thereby capping the opening of the GroEL channel. The protein is Co-chaperonin GroES of Shouchella clausii (strain KSM-K16) (Alkalihalobacillus clausii).